The chain runs to 315 residues: 4-hydroxy-3-methylbut-2-enyl diphosphate reductase (315 aa).

Residue cysteine 12 participates in [4Fe-4S] cluster binding. 2 residues coordinate (2E)-4-hydroxy-3-methylbut-2-enyl diphosphate: histidine 41 and histidine 74. Dimethylallyl diphosphate contacts are provided by histidine 41 and histidine 74. Isopentenyl diphosphate contacts are provided by histidine 41 and histidine 74. Cysteine 96 contributes to the [4Fe-4S] cluster binding site. Histidine 124 provides a ligand contact to (2E)-4-hydroxy-3-methylbut-2-enyl diphosphate. Histidine 124 lines the dimethylallyl diphosphate pocket. Residue histidine 124 coordinates isopentenyl diphosphate. Glutamate 126 serves as the catalytic Proton donor. Threonine 168 contributes to the (2E)-4-hydroxy-3-methylbut-2-enyl diphosphate binding site. Cysteine 198 contributes to the [4Fe-4S] cluster binding site. (2E)-4-hydroxy-3-methylbut-2-enyl diphosphate is bound by residues serine 226, serine 227, asparagine 228, and serine 270. Residues serine 226, serine 227, asparagine 228, and serine 270 each contribute to the dimethylallyl diphosphate site. Serine 226, serine 227, asparagine 228, and serine 270 together coordinate isopentenyl diphosphate.

Belongs to the IspH family. [4Fe-4S] cluster is required as a cofactor.

It carries out the reaction isopentenyl diphosphate + 2 oxidized [2Fe-2S]-[ferredoxin] + H2O = (2E)-4-hydroxy-3-methylbut-2-enyl diphosphate + 2 reduced [2Fe-2S]-[ferredoxin] + 2 H(+). The enzyme catalyses dimethylallyl diphosphate + 2 oxidized [2Fe-2S]-[ferredoxin] + H2O = (2E)-4-hydroxy-3-methylbut-2-enyl diphosphate + 2 reduced [2Fe-2S]-[ferredoxin] + 2 H(+). It functions in the pathway isoprenoid biosynthesis; dimethylallyl diphosphate biosynthesis; dimethylallyl diphosphate from (2E)-4-hydroxy-3-methylbutenyl diphosphate: step 1/1. The protein operates within isoprenoid biosynthesis; isopentenyl diphosphate biosynthesis via DXP pathway; isopentenyl diphosphate from 1-deoxy-D-xylulose 5-phosphate: step 6/6. Its function is as follows. Catalyzes the conversion of 1-hydroxy-2-methyl-2-(E)-butenyl 4-diphosphate (HMBPP) into a mixture of isopentenyl diphosphate (IPP) and dimethylallyl diphosphate (DMAPP). Acts in the terminal step of the DOXP/MEP pathway for isoprenoid precursor biosynthesis. The sequence is that of 4-hydroxy-3-methylbut-2-enyl diphosphate reductase from Pseudomonas putida (strain W619).